A 171-amino-acid chain; its full sequence is CDP-archaeol synthase (171 aa).

Transmembrane regions (helical) follow at residues 11-31 (VLYV…GLVF), 65-85 (VGLV…IGVI), 129-149 (LILV…IMLI), and 151-171 (LVLH…DVWY).

This sequence belongs to the CDP-archaeol synthase family. The cofactor is Mg(2+).

Its subcellular location is the cell membrane. The catalysed reaction is 2,3-bis-O-(geranylgeranyl)-sn-glycerol 1-phosphate + CTP + H(+) = CDP-2,3-bis-O-(geranylgeranyl)-sn-glycerol + diphosphate. It functions in the pathway membrane lipid metabolism; glycerophospholipid metabolism. Functionally, catalyzes the formation of CDP-2,3-bis-(O-geranylgeranyl)-sn-glycerol (CDP-archaeol) from 2,3-bis-(O-geranylgeranyl)-sn-glycerol 1-phosphate (DGGGP) and CTP. This reaction is the third ether-bond-formation step in the biosynthesis of archaeal membrane lipids. In Methanothermobacter thermautotrophicus (strain ATCC 29096 / DSM 1053 / JCM 10044 / NBRC 100330 / Delta H) (Methanobacterium thermoautotrophicum), this protein is CDP-archaeol synthase.